Here is a 392-residue protein sequence, read N- to C-terminus: Phosphoglycerate kinase (392 aa).

Substrate contacts are provided by residues 21-23, R36, 59-62, R113, and R146; these read DFN and HLGR. ATP-binding positions include K197, E319, and 345-348; that span reads GGDT.

This sequence belongs to the phosphoglycerate kinase family. In terms of assembly, monomer.

It localises to the cytoplasm. It carries out the reaction (2R)-3-phosphoglycerate + ATP = (2R)-3-phospho-glyceroyl phosphate + ADP. The protein operates within carbohydrate degradation; glycolysis; pyruvate from D-glyceraldehyde 3-phosphate: step 2/5. This Francisella philomiragia subsp. philomiragia (strain ATCC 25017 / CCUG 19701 / FSC 153 / O#319-036) protein is Phosphoglycerate kinase.